A 619-amino-acid chain; its full sequence is Dihydroxy-acid dehydratase (619 aa).

D81 serves as a coordination point for Mg(2+). C122 lines the [2Fe-2S] cluster pocket. Residues D123 and K124 each contribute to the Mg(2+) site. Residue K124 is modified to N6-carboxylysine. C198 provides a ligand contact to [2Fe-2S] cluster. E494 lines the Mg(2+) pocket. S520 (proton acceptor) is an active-site residue.

This sequence belongs to the IlvD/Edd family. As to quaternary structure, homodimer. [2Fe-2S] cluster serves as cofactor. The cofactor is Mg(2+).

It catalyses the reaction (2R)-2,3-dihydroxy-3-methylbutanoate = 3-methyl-2-oxobutanoate + H2O. The enzyme catalyses (2R,3R)-2,3-dihydroxy-3-methylpentanoate = (S)-3-methyl-2-oxopentanoate + H2O. It functions in the pathway amino-acid biosynthesis; L-isoleucine biosynthesis; L-isoleucine from 2-oxobutanoate: step 3/4. The protein operates within amino-acid biosynthesis; L-valine biosynthesis; L-valine from pyruvate: step 3/4. Its function is as follows. Functions in the biosynthesis of branched-chain amino acids. Catalyzes the dehydration of (2R,3R)-2,3-dihydroxy-3-methylpentanoate (2,3-dihydroxy-3-methylvalerate) into 2-oxo-3-methylpentanoate (2-oxo-3-methylvalerate) and of (2R)-2,3-dihydroxy-3-methylbutanoate (2,3-dihydroxyisovalerate) into 2-oxo-3-methylbutanoate (2-oxoisovalerate), the penultimate precursor to L-isoleucine and L-valine, respectively. In Neisseria meningitidis serogroup A / serotype 4A (strain DSM 15465 / Z2491), this protein is Dihydroxy-acid dehydratase.